Consider the following 481-residue polypeptide: RAC-beta serine/threonine-protein kinase (481 aa).

The residue at position 1 (Met-1) is an N-acetylmethionine. One can recognise a PH domain in the interval 5–108 (SVIKEGWLHK…WMRAIQMVAN (104 aa)). Phosphoserine is present on Ser-34. A disulfide bridge connects residues Cys-60 and Cys-77. At Ser-126 the chain carries Phosphoserine. 2 O-linked (GlcNAc) serine glycosylation sites follow: Ser-128 and Ser-131. The Protein kinase domain occupies 152–409 (FDYLKLLGKG…AKEVMEHRFF (258 aa)). ATP contacts are provided by residues 158–166 (LGKGTFGKV) and Lys-181. The Proton acceptor role is filled by Asp-275. Residues Asn-280 and Asp-293 each coordinate Mn(2+). A disulfide bridge links Cys-297 with Cys-311. The O-linked (GlcNAc) threonine glycan is linked to Thr-306. Residue Thr-309 is modified to Phosphothreonine; by PDPK1. Thr-313 is a glycosylation site (O-linked (GlcNAc) threonine). The region spanning 410-481 (LSINWQDVVQ…QFSYSASIRE (72 aa)) is the AGC-kinase C-terminal domain. The residue at position 447 (Ser-447) is a Phosphoserine. Phosphothreonine is present on Thr-451. A phosphoserine; by MTOR mark is found at Ser-474 and Ser-478. The O-linked (GlcNAc) serine; alternate glycan is linked to Ser-474.

It belongs to the protein kinase superfamily. AGC Ser/Thr protein kinase family. RAC subfamily. In terms of assembly, interacts with BTBD10. Interacts with KCTD20. Interacts (via PH domain) with MTCP1, TCL1A and TCL1B; this interaction may facilitate AKT2 oligomerization and phosphorylation, hence increasing kinase activity. Interacts with PHB2; this interaction may be important for myogenic differentiation. Interacts (when phosphorylated) with CLIP3/ClipR-59; this interaction promotes cell membrane localization. Interacts with WDFY2 (via WD repeats 1-3). In terms of processing, phosphorylation on Thr-309 and Ser-474 is required for full activity. Phosphorylation of the activation loop at Thr-309 by PDPK1/PDK1 is a prerequisite for full activation. Phosphorylated and activated by PDPK1/PDK1 in the presence of phosphatidylinositol 3,4,5-trisphosphate. Phosphorylation by mTORC2 in response to growth factors plays a key role in AKT1 activation: mTORC2 phosphorylates different sites depending on the context, such as Ser-474 or Ser-478, thereby facilitating subsequent phosphorylation of the activation loop by PDPK1/PDK1. Ubiquitinated; undergoes both 'Lys-48'- and 'Lys-63'-linked polyubiquitination. TRAF6-induced 'Lys-63'-linked AKT2 ubiquitination. When fully phosphorylated and translocated into the nucleus, undergoes 'Lys-48'-polyubiquitination catalyzed by TTC3, leading to its degradation by the proteasome. Post-translationally, O-GlcNAcylation at Thr-306 and Thr-313 inhibits activating phosphorylation at Thr-309 via disrupting the interaction between AKT and PDPK1/PDK1.

Its subcellular location is the cytoplasm. It localises to the nucleus. The protein resides in the cell membrane. It is found in the early endosome. The enzyme catalyses L-seryl-[protein] + ATP = O-phospho-L-seryl-[protein] + ADP + H(+). It catalyses the reaction L-threonyl-[protein] + ATP = O-phospho-L-threonyl-[protein] + ADP + H(+). Its activity is regulated as follows. Two specific sites, one in the kinase domain (Thr-309) and the other in the C-terminal regulatory region (Ser-474), need to be phosphorylated for its full activation. AKT2 phosphorylation of PKP1 is induced by insulin. Inhibited by Akt inhibitor MK2206. Its function is as follows. AKT2 is one of 3 closely related serine/threonine-protein kinases (AKT1, AKT2 and AKT3) called the AKT kinases, and which regulate many processes including metabolism, proliferation, cell survival, growth and angiogenesis. This is mediated through serine and/or threonine phosphorylation of a range of downstream substrates. Over 100 substrate candidates have been reported so far, but for most of them, no isoform specificity has been reported. AKT is responsible of the regulation of glucose uptake by mediating insulin-induced translocation of the SLC2A4/GLUT4 glucose transporter to the cell surface. Phosphorylation of PTPN1 at 'Ser-50' negatively modulates its phosphatase activity preventing dephosphorylation of the insulin receptor and the attenuation of insulin signaling. Phosphorylation of TBC1D4 triggers the binding of this effector to inhibitory 14-3-3 proteins, which is required for insulin-stimulated glucose transport. AKT also regulates the storage of glucose in the form of glycogen by phosphorylating GSK3A at 'Ser-21' and GSK3B at 'Ser-9', resulting in inhibition of its kinase activity. Phosphorylation of GSK3 isoforms by AKT is also thought to be one mechanism by which cell proliferation is driven. AKT also regulates cell survival via the phosphorylation of MAP3K5 (apoptosis signal-related kinase). Phosphorylation of 'Ser-83' decreases MAP3K5 kinase activity stimulated by oxidative stress and thereby prevents apoptosis. AKT mediates insulin-stimulated protein synthesis by phosphorylating TSC2 at 'Ser-939' and 'Thr-1462', thereby activating mTORC1 signaling and leading to both phosphorylation of 4E-BP1 and in activation of RPS6KB1. AKT is involved in the phosphorylation of members of the FOXO factors (Forkhead family of transcription factors), leading to binding of 14-3-3 proteins and cytoplasmic localization. In particular, FOXO1 is phosphorylated at 'Thr-24', 'Ser-256' and 'Ser-319'. FOXO3 and FOXO4 are phosphorylated on equivalent sites. AKT has an important role in the regulation of NF-kappa-B-dependent gene transcription and positively regulates the activity of CREB1 (cyclic AMP (cAMP)-response element binding protein). The phosphorylation of CREB1 induces the binding of accessory proteins that are necessary for the transcription of pro-survival genes such as BCL2 and MCL1. AKT phosphorylates 'Ser-454' on ATP citrate lyase (ACLY), thereby potentially regulating ACLY activity and fatty acid synthesis. Activates the 3B isoform of cyclic nucleotide phosphodiesterase (PDE3B) via phosphorylation of 'Ser-273', resulting in reduced cyclic AMP levels and inhibition of lipolysis. Phosphorylates PIKFYVE on 'Ser-318', which results in increased PI(3)P-5 activity. The Rho GTPase-activating protein DLC1 is another substrate and its phosphorylation is implicated in the regulation cell proliferation and cell growth. AKT plays a role as key modulator of the AKT-mTOR signaling pathway controlling the tempo of the process of newborn neurons integration during adult neurogenesis, including correct neuron positioning, dendritic development and synapse formation. Signals downstream of phosphatidylinositol 3-kinase (PI(3)K) to mediate the effects of various growth factors such as platelet-derived growth factor (PDGF), epidermal growth factor (EGF), insulin and insulin-like growth factor I (IGF-I). AKT mediates the antiapoptotic effects of IGF-I. Essential for the SPATA13-mediated regulation of cell migration and adhesion assembly and disassembly. May be involved in the regulation of the placental development. In response to lysophosphatidic acid stimulation, inhibits the ciliogenesis cascade. In this context, phosphorylates WDR44, hence stabilizing its interaction with Rab11 and preventing the formation of the ciliogenic Rab11-FIP3-RAB3IP complex. Also phosphorylates RAB3IP/Rabin8, thus may affect RAB3IP guanine nucleotide exchange factor (GEF) activity toward Rab8, which is important for cilia growth. Phosphorylates PKP1, facilitating its interaction with YWHAG and translocation to the nucleus, ultimately resulting in a reduction in keratinocyte intercellular adhesion. Phosphorylation of PKP1 increases PKP1 protein stability, translocation to the cytoplasm away from desmosome plaques and PKP1-driven cap-dependent translation. Functionally, several AKT2-specific substrates have been identified, including ANKRD2, C2CD5, CLK2 and PITX2. May play a role in myoblast differentiation. In this context, may act through PITX2 phosphorylation. Unphosphorylated PITX2 associates with an ELAVL1/HuR-containing complex, which stabilizes cyclin mRNA and ensuring cell proliferation. Phosphorylation by AKT2 impairs this association, leading to CCND1 mRNA destabilization and progression towards differentiation. Also involved in the negative regulation of myogenesis in response to stress conditions. In this context, acts by phosphorylating ANKRD2. May also be a key regulator of glucose uptake. Regulates insulin-stimulated glucose transport by the increase of glucose transporter GLUT4 translocation from intracellular stores to the plasma membrane. In this context, acts by phosphorylating C2CD5/CDP138 on 'Ser-197' in insulin-stimulated adipocytes. Through the phosphorylation of CLK2 on 'Thr-343', involved in insulin-regulated suppression of hepatic gluconeogenesis. This Mus musculus (Mouse) protein is RAC-beta serine/threonine-protein kinase (Akt2).